Here is a 429-residue protein sequence, read N- to C-terminus: Enolase (429 aa).

Position 163 (Gln163) interacts with (2R)-2-phosphoglycerate. The Proton donor role is filled by Glu205. The Mg(2+) site is built by Asp242, Glu285, and Asp312. Residues Lys337, Arg366, Ser367, and Lys388 each coordinate (2R)-2-phosphoglycerate. The active-site Proton acceptor is the Lys337.

This sequence belongs to the enolase family. It depends on Mg(2+) as a cofactor.

Its subcellular location is the cytoplasm. The protein localises to the secreted. The protein resides in the cell surface. The enzyme catalyses (2R)-2-phosphoglycerate = phosphoenolpyruvate + H2O. It functions in the pathway carbohydrate degradation; glycolysis; pyruvate from D-glyceraldehyde 3-phosphate: step 4/5. Functionally, catalyzes the reversible conversion of 2-phosphoglycerate (2-PG) into phosphoenolpyruvate (PEP). It is essential for the degradation of carbohydrates via glycolysis. This chain is Enolase, found in Oceanobacillus iheyensis (strain DSM 14371 / CIP 107618 / JCM 11309 / KCTC 3954 / HTE831).